Here is a 448-residue protein sequence, read N- to C-terminus: Trigger factor (448 aa).

A PPIase FKBP-type domain is found at 161–246 (GDQVTIDFEG…VHKVAGKQLP (86 aa)). The tract at residues 428–448 (ALQAAQQQEGAEEEAQEETSA) is disordered. Over residues 437–448 (GAEEEAQEETSA) the composition is skewed to acidic residues.

This sequence belongs to the FKBP-type PPIase family. Tig subfamily.

The protein localises to the cytoplasm. It carries out the reaction [protein]-peptidylproline (omega=180) = [protein]-peptidylproline (omega=0). Functionally, involved in protein export. Acts as a chaperone by maintaining the newly synthesized protein in an open conformation. Functions as a peptidyl-prolyl cis-trans isomerase. The sequence is that of Trigger factor from Chromohalobacter salexigens (strain ATCC BAA-138 / DSM 3043 / CIP 106854 / NCIMB 13768 / 1H11).